A 398-amino-acid polypeptide reads, in one-letter code: Secreted aspartic protease 2 (398 aa).

Residues 1–18 (MFLKNIFIALAIALLVDA) form the signal peptide. Positions 19-56 (TPTTTKRSAGFVALDFSVVKTPKAFPVTNGQEGKTSKR) are cleaved as a propeptide — activation peptide. Positions 70–384 (YAADITVGSN…DLDDNEISLA (315 aa)) constitute a Peptidase A1 domain. Aspartate 88 is an active-site residue. 88–90 (DTG) contributes to the pepstatin A binding site. Cysteines 103 and 115 form a disulfide. 141–142 (GD) serves as a coordination point for pepstatin A. Zn(2+) contacts are provided by aspartate 247 and aspartate 270. The active site involves aspartate 274. 274–278 (DSGTT) is a pepstatin A binding site. Cysteine 312 and cysteine 350 are disulfide-bonded. N-linked (GlcNAc...) asparagine glycosylation is found at asparagine 313 and asparagine 321.

It belongs to the peptidase A1 family. As to quaternary structure, monomer.

It is found in the secreted. The enzyme catalyses Preferential cleavage at the carboxyl of hydrophobic amino acids, but fails to cleave 15-Leu-|-Tyr-16, 16-Tyr-|-Leu-17 and 24-Phe-|-Phe-25 of insulin B chain. Activates trypsinogen, and degrades keratin.. Functionally, secreted aspartic peptidases (SAPs) are a group of ten acidic hydrolases considered as key virulence factors. These enzymes supply the fungus with nutrient amino acids as well as are able to degrade the selected host's proteins involved in the immune defense. Induces host inflammatory cytokine production in a proteolytic activity-independent way. Plays a role in tissue damage during superficial infection. Moreover, acts toward human hemoglobin though limited proteolysis to generate a variety of antimicrobial hemocidins, enabling to compete with the other microorganisms of the same physiological niche using the microbicidal peptides generated from the host protein. Its function is as follows. Plays a key role in defense against host by cleaving histatin-5 (Hst 5), a peptide from human saliva that carries out fungicidal activity. The cleavage rate decreases in an order of SAP2 &gt; SAP9 &gt; SAP3 &gt; SAP7 &gt; SAP4 &gt; SAP1 &gt; SAP8. The first cleavage occurs between residues 'Lys-17' and 'His-18' of Hst 5, giving DSHAKRHHGYKRKFHEK and HHSHRGY peptides. Simultaneously, the DSHAKRHHGYKRK peptide is also formed. Further fragmentation by SAP2 results in FHEK and DSHAKRHHGY products. This chain is Secreted aspartic protease 2, found in Candida albicans (strain SC5314 / ATCC MYA-2876) (Yeast).